We begin with the raw amino-acid sequence, 449 residues long: POU domain, class 5, transcription factor 1.1 (449 aa).

Disordered regions lie at residues 79–125 (ENNQ…SPPN) and 170–233 (YPTP…PSES). Residues 97–110 (SRIKVKEEVVHETD) show a composition bias toward basic and acidic residues. Polar residues predominate over residues 170–180 (YPTPANQSPNT). Residues 187–199 (SSMESSRCSSTNS) show a composition bias toward low complexity. Residues 224–233 (DNEEEVPSES) are compositionally biased toward acidic residues. Positions 227–301 (EEVPSESEME…FLERWVVEAE (75 aa)) constitute a POU-specific domain. The segment at residues 321 to 380 (KRKRRTNIENIVKGTLESYFMKCPKPGAQEMVQIAKELNMDKDVVRVWFCNRRQKGKRQG) is a DNA-binding region (homeobox).

The protein belongs to the POU transcription factor family. Class-5 subfamily. In terms of assembly, interacts with components of the transcription complex that assembles on the vent2-B gene, including vent2 (via C-terminus), smad1 and smad4. Forms a repression complex on the promoters of the gsc and mix2 genes via interactions with the nodal/activin signaling pathway transducers foxh1/fast1, gtf2ird1/wbscr11 and smad2. Forms a repression complex on the promoters of the nodal/nr1 and siamois genes with the maternal factors tcf7l1/tcf3 and vegt. As to expression, highly enriched within the animal half of developing embryos within ectodermal and mesodermal regions. Expressed in the neuroectoderm at the early neurula stage, with expression initially extending to the future hindbrain/midbrain boundary, but later shifting toward the posterior pole where it persists within the tip of the tail in hatching embryos. Expressed at very low levels in the adult kidney.

Its subcellular location is the nucleus. Functionally, transcription factor that binds to the octamer motif (5'-ATTTGCAT-3'). Activates transcription when directly bound to the octamer DNA sequence, but can form repression complexes with other proteins at the promoter site to inhibit transcription. Binds to the promoter of the vent2-B gene to activate transcription when in the presence of other BMP signaling factors also bound to the promoter. Inhibits the competence of ectodermal cells to respond to BMP during embryogenesis thereby inhibiting epidermal differentiation and promoting neural induction. Antagonizes the activity of nodal/activin signaling by forming a transcriptional repression complex on the gsc and mix2 gene promoters to inhibit their transcription, and thus maintain the undifferentiated state of embryonic cells to prevent them from differentiating prematurely. Acts maternally to inhibit vegt and beta-catenin-activated gene transcription by forming a transcriptional repression complex on the nodal/nr1 and siamois promoters to inhibit their transcription. The polypeptide is POU domain, class 5, transcription factor 1.1 (pou5f1.1) (Xenopus laevis (African clawed frog)).